The following is a 175-amino-acid chain: NADH-ubiquinone oxidoreductase chain 6 (175 aa).

5 helical membrane passes run 1–21 (MVTYIVFVLSIIFVISFVGVS), 25–45 (SPIYGGLGLIVGGGAGCGVVL), 47–67 (FGGSFLGLMVFLIYLGGMLVV), 88–108 (VVLGAFILGLVVESLIVIYAL), and 149–169 (YGVWLVIVTGWSLFVSVVIIM).

The protein belongs to the complex I subunit 6 family. As to quaternary structure, core subunit of respiratory chain NADH dehydrogenase (Complex I) which is composed of 45 different subunits.

The protein localises to the mitochondrion inner membrane. The enzyme catalyses a ubiquinone + NADH + 5 H(+)(in) = a ubiquinol + NAD(+) + 4 H(+)(out). Functionally, core subunit of the mitochondrial membrane respiratory chain NADH dehydrogenase (Complex I) which catalyzes electron transfer from NADH through the respiratory chain, using ubiquinone as an electron acceptor. Essential for the catalytic activity and assembly of complex I. This is NADH-ubiquinone oxidoreductase chain 6 (MT-ND6) from Balaenoptera musculus (Blue whale).